A 155-amino-acid chain; its full sequence is Ribosome maturation factor RimP (155 aa).

It belongs to the RimP family.

It is found in the cytoplasm. Required for maturation of 30S ribosomal subunits. In Staphylococcus aureus (strain JH9), this protein is Ribosome maturation factor RimP.